The chain runs to 211 residues: tRNA (guanine-N(7)-)-methyltransferase (211 aa).

Residues Glu37, Asp62, Glu89, and Asp112 each coordinate S-adenosyl-L-methionine. Asp112 is a catalytic residue. Positions 116 and 148 each coordinate substrate.

Belongs to the class I-like SAM-binding methyltransferase superfamily. TrmB family.

The catalysed reaction is guanosine(46) in tRNA + S-adenosyl-L-methionine = N(7)-methylguanosine(46) in tRNA + S-adenosyl-L-homocysteine. The protein operates within tRNA modification; N(7)-methylguanine-tRNA biosynthesis. Catalyzes the formation of N(7)-methylguanine at position 46 (m7G46) in tRNA. The polypeptide is tRNA (guanine-N(7)-)-methyltransferase (Geobacter metallireducens (strain ATCC 53774 / DSM 7210 / GS-15)).